The following is a 301-amino-acid chain: MTRHGKNCTAGAVYTYHEKKKDTAASGYGTQNIRLSRDAVKDFDCCCLSLQPCHDPVVTPDGYLYEREAILEYILHQKKEIARQMKAYEKQRGTRREEQKELQRAASQDHVRGFLEKESAIVSRPLNPFTAKALSGTSPDDVQPGPSVGPPSKDKDKVLPSFWIPSLTPEAKATKLEKPSRTVTCPMSGKPLRMSDLTPVHFTPLDSSVDRVGLITRSERYVCAVTRDSLSNATPCAVLRPSGAVVTLECVEKLIRKDMVDPVTGDKLTDRDIIVLQRGGTGFAGSGVKLQAEKSRPVMQA.

A Phosphoserine modification is found at S36. Positions 55-75 (DPVVTPDGYLYEREAILEYIL) are U-box-like. The Nuclear localization signal motif lies at 78–101 (KKEIARQMKAYEKQRGTRREEQKE). Position 107 is a phosphoserine (S107). The interval 132–157 (KALSGTSPDDVQPGPSVGPPSKDKDK) is disordered.

This sequence belongs to the NOSIP family. Interacts with NOS1 and NOS3. Interacts with PP2A holoenzyme, containing PPP2CA, PPP2CB, PPP2R1A and PPP2R2A subunits. In terms of tissue distribution, expressed in heart, brain and lung. Present in endothelial cells (at protein level).

It localises to the cytoplasm. It is found in the nucleus. It catalyses the reaction S-ubiquitinyl-[E2 ubiquitin-conjugating enzyme]-L-cysteine + [acceptor protein]-L-lysine = [E2 ubiquitin-conjugating enzyme]-L-cysteine + N(6)-ubiquitinyl-[acceptor protein]-L-lysine.. Functionally, E3 ubiquitin-protein ligase that is essential for proper development of the forebrain, the eye, and the face. Catalyzes monoubiquitination of serine/threonine-protein phosphatase 2A (PP2A) catalytic subunit PPP2CA/PPP2CB. Negatively regulates nitric oxide production by inducing NOS1 and NOS3 translocation to actin cytoskeleton and inhibiting their enzymatic activity. The chain is Nitric oxide synthase-interacting protein (NOSIP) from Homo sapiens (Human).